Reading from the N-terminus, the 474-residue chain is Glutathione synthetase (474 aa).

The residue at position 2 (Ala-2) is an N-acetylalanine. Arg-125 serves as a coordination point for substrate. An ATP-binding site is contributed by Glu-144. The Mg(2+) site is built by Glu-144 and Asn-146. Substrate contacts are provided by residues 148 to 151 (ISAS), 214 to 216 (ERN), Gln-220, and 267 to 270 (RDGY). ATP contacts are provided by residues Lys-305, 364–373 (KPQREGGGNN), Tyr-375, and 398–401 (MEKI). Glu-368 lines the Mg(2+) pocket. Ser-415 bears the Phosphoserine mark. Glu-425 is a binding site for ATP. Arg-450 contacts substrate. The ATP site is built by Lys-452 and Asp-458. Substrate is bound at residue 461–462 (VA).

Belongs to the eukaryotic GSH synthase family. In terms of assembly, homodimer. Requires Mg(2+) as cofactor.

The enzyme catalyses gamma-L-glutamyl-L-cysteine + glycine + ATP = glutathione + ADP + phosphate + H(+). The catalysed reaction is gamma-L-glutamyl-(2S)-2-aminobutanoate + glycine + ATP = ophthalmate + ADP + phosphate + H(+). Its pathway is sulfur metabolism; glutathione biosynthesis; glutathione from L-cysteine and L-glutamate: step 2/2. In terms of biological role, catalyzes the production of glutathione from gamma-glutamylcysteine and glycine in an ATP-dependent manner. Glutathione (gamma-glutamylcysteinylglycine, GSH) is the most abundant intracellular thiol in living aerobic cells and is required for numerous processes including the protection of cells against oxidative damage, amino acid transport, the detoxification of foreign compounds, the maintenance of protein sulfhydryl groups in a reduced state and acts as a cofactor for a number of enzymes. Participates in ophthalmate biosynthesis in hepatocytes. The protein is Glutathione synthetase of Rattus norvegicus (Rat).